A 1769-amino-acid polypeptide reads, in one-letter code: MSARAAAAKNTAMEETAIWEQHTVTLHRAPGFGFGIAISGGRDNPHFQSGETSIVISDVLKGGPAEGQLQENDRVAMVNGVSMDNVEHAFAVQQLRKSGKNAKITIRRKKKVQIPVSRPDPEPVSENEDSYDEEVHDPRSSRGGLVSRRSEKSWARDRSASRERSLSPRSDRRSVASSQPPKPTKVTLVKSRKNEEYGLRLASHIFVKEISQDSLAARDGNIQEGDVVLKINGTVTENMSLTDAKTLIERSKGKLKMVVQRDERATLLNVPDLSDSIHSANASERDDISEIQSLASDHSGRSHDRPPRHSRSRSPDQRSEPSDHSRHSPQQPSSGSLRSREEERISKPGAVSTPVKHADDHTHKTVEEVVVERNEKQAPSLPEPKPVYAQVGQPDVDLPVSPSDGVLPNSTHEDGILRPSMKLVKFRKGDSVGLRLAGGNDVGIFVAGVLEDSPAAKEGLEEGDQILRVNNVDFTNIIREEAVLFLLDLPKGEEVTILAQKKKDVYRRIVESDVGDSFYIRTHFEYEKESPYGLSFNKGEVFRVVDTLYNGKLGSWLAIRIGKNHKEVERGIIPNKNRAEQLASVQYTLPKTAGGDRADFWRFRGLRSSKRNLRKSREDLSAQPVQTKFPAYERVVLREAGFLRPVTIFGPIADVAREKLAREEPDIYQIAKSEPRDAGTDQRSSGIIRLHTIKQIIDQDKHALLDVTPNAVDRLNYAQWYPIVVFLNPDSKQGVKTMRMRLCPESRKSARKLYERSHKLRKNNHHLFTTTINLNSMNDGWYGALKEAIQQQQNQLVWVSEGKADGATSDDLDLHDDRLSYLSAPGSEYSMYSTDSRHTSDYEDTDTEGGAYTDQELDETLNDEVGTPPESAITRSSEPVREDSSGMHHENQTYPPYSPQAQPQPIHRIDSPGFKTASQQKAEASSPVPYLSPETNPASSTSAVNHNVTLTNVRLEGPTPAPSTSYSPQADSLRTPSTEAAHIMLRDQEPSLPSHVEPAKVYRKDPYPEEMMRQNHVLKQPAVGHPGQRPDKEPNLSYESQPPYVEKQANRDLEQPTYRYDSSSYTDQFSRNYDHRLRYEERIPTYEEQWSYYDDKQPYQPRPSLDNQHPRDLDSRQHPEESSERGSYPRFEEPAPLSYDSRPRYDQPPRTSTLRHEEQPTPGYDMHNRYRPEAQSYSSAGPKASEPKQYFDQYPRSYEQVPSQGFSSKAGHYEPLHGAAVVPPLIPASQHKPEVLPSNTKPLPPPPTLTEEEEDPAMKPQSVLTRVKMFENKRSASLENKKDENHTAGFKPPEVASKPPGAPIIGPKPTPQNQFSEHDKTLYRIPEPQKPQMKPPEDIVRSNHYDPEEDEEYYRKQLSYFDRRSFENKPSTHIPAGHLSEPAKPVHSQNQTNFSSYSSKGKSPEADAPDRSFGEKRYEPVQATPPPPPLPSQYAQPSQPGTSSSLALHTHAKGAHGEGNSISLDFQNSLVSKPDPPPSQNKPATFRPPNREDTVQSTFYPQKSFPDKAPVNGAEQTQKTVTPAYNRFTPKPYTSSARPFERKFESPKFNHNLLPSETAHKPDLSSKAPASPKTLAKAHSRAQPPEFDSGVETFSIHADKPKYQMNNLSTVPKAIPVSPSAVEEDEDEDGHTVVATARGVFNNNGGVLSSIETGVSIIIPQGAIPEGVEQEIYFKVCRDNSILPPLDKEKGETLLSPLVMCGPHGLKFLKPVELRLPHCASMTPDGWSFALKSSDSSSGDPKTWQNKCLPGDPNYLVGANCVSVLIDHF.

The PDZ 1 domain maps to 23–110 (TVTLHRAPGF…NAKITIRRKK (88 aa)). Basic residues predominate over residues 102-112 (AKITIRRKKKV). The interval 102-188 (AKITIRRKKK…QPPKPTKVTL (87 aa)) is disordered. Residues 123–135 (PVSENEDSYDEEV) are compositionally biased toward acidic residues. Serine 125 carries the phosphoserine modification. The residue at position 131 (tyrosine 131) is a Phosphotyrosine. Basic and acidic residues predominate over residues 148 to 174 (RRSEKSWARDRSASRERSLSPRSDRRS). Phosphoserine is present on residues serine 174, serine 177, and serine 178. A Phosphothreonine modification is found at threonine 184. One can recognise a PDZ 2 domain in the interval 185–263 (KVTLVKSRKN…KLKMVVQRDE (79 aa)). Phosphoserine is present on residues serine 211 and serine 240. At threonine 266 the chain carries Phosphothreonine. Serine 274, serine 276, serine 279, serine 283, serine 289, serine 293, serine 296, serine 299, serine 322, serine 328, serine 333, serine 336, and serine 352 each carry phosphoserine. The segment at 295–362 (ASDHSGRSHD…TPVKHADDHT (68 aa)) is disordered. Over residues 298-326 (HSGRSHDRPPRHSRSRSPDQRSEPSDHSR) the composition is skewed to basic and acidic residues. Residue threonine 353 is modified to Phosphothreonine. Residues 420–501 (SMKLVKFRKG…GEEVTILAQK (82 aa)) form the PDZ 3 domain. The region spanning 515–583 (GDSFYIRTHF…PNKNRAEQLA (69 aa)) is the SH3 domain. The Guanylate kinase-like domain occupies 609–790 (SKRNLRKSRE…WYGALKEAIQ (182 aa)). Phosphoserine occurs at positions 616 and 621. The segment at 632 to 875 (YERVVLREAG…GTPPESAITR (244 aa)) is occludin (OCLN)-binding region. Position 808 is a phosphothreonine (threonine 808). 2 positions are modified to phosphoserine: serine 809 and serine 820. Residue tyrosine 821 is modified to Phosphotyrosine. Serine 823, serine 827, and serine 836 each carry phosphoserine. 2 disordered regions span residues 824-976 (APGS…LRTP) and 1010-1067 (EMMR…SYTD). 5 positions are modified to phosphothreonine: threonine 845, threonine 847, threonine 853, threonine 860, and threonine 867. Over residues 878–891 (EPVREDSSGMHHEN) the composition is skewed to basic and acidic residues. The segment covering 892–905 (QTYPPYSPQAQPQP) has biased composition (low complexity). A Phosphoserine modification is found at serine 911. 2 stretches are compositionally biased toward polar residues: residues 933 to 952 (PETN…TLTN) and 962 to 976 (PSTS…LRTP). Position 967 is a phosphoserine (serine 967). Phosphoserine is present on serine 1070. 3 disordered regions span residues 1091-1212 (SYYD…KAGH), 1224-1261 (PLIP…MKPQ), and 1273-1589 (KRSA…EFDS). The span at 1108 to 1124 (QHPRDLDSRQHPEESSE) shows a compositional bias: basic and acidic residues. The residue at position 1138 (serine 1138) is a Phosphoserine. Phosphotyrosine occurs at positions 1139 and 1164. Residues 1150 to 1370 (RTSTLRHEEQ…FDRRSFENKP (221 aa)) form an actin-binding region (ABR) region. The span at 1273–1286 (KRSASLENKKDENH) shows a compositional bias: basic and acidic residues. Residues 1300-1310 (PGAPIIGPKPT) are compositionally biased toward pro residues. Positions 1335–1346 (PPEDIVRSNHYD) are enriched in basic and acidic residues. Residue tyrosine 1353 is modified to Phosphotyrosine. The residue at position 1365 (serine 1365) is a Phosphoserine. A compositionally biased stretch (polar residues) spans 1387 to 1401 (HSQNQTNFSSYSSKG). Basic and acidic residues predominate over residues 1402 to 1419 (KSPEADAPDRSFGEKRYE). The residue at position 1412 (serine 1412) is a Phosphoserine. Polar residues-rich tracts occupy residues 1460–1471 (NSISLDFQNSLV) and 1514–1523 (AEQTQKTVTP). The segment covering 1539–1548 (PFERKFESPK) has biased composition (basic and acidic residues). Serine 1546 and serine 1618 each carry phosphoserine. One can recognise a ZU5 domain in the interval 1635-1769 (ATARGVFNNN…NCVSVLIDHF (135 aa)).

The protein belongs to the MAGUK family. As to quaternary structure, homodimer. Forms heterodimers TJP3. Forms a heterodimer (via PDZ2 domain) with TJP2/ZO2 (via PDZ2 domain). Interacts with OCLN. Interacts with CALM, claudins, CGN/cingulin, CXADR, GJA12, GJD3 and UBN1. Interacts (via ZU5 domain) with CDC42BPB and MYZAP. Interacts (via PDZ domain) with GJA1. Interacts (via PDZ domains) with ANKRD2. Interacts with POPDC1 (via the C-terminus cytoplasmic tail). Interacts with HSPA4. Interacts with KIRREL1. Interacts with DLL1. Interacts with USP53 (via the C-terminal region). Interacts with DNMBP (via C-terminal domain); required for the apical cell-cell junction localization of DNMBP. Interacts with SPEF1. Interacts (via N-terminus) with CTNNA1. Interacts with CLDN18. Interacts with CLDN16 (via TRV motif); this is a prerequisite for anchoring of CLDN16 at the tight junction. Interacts with PKP1; the interaction facilitates TJP1/ZO-1 localization to the plasma membrane. Interacts with PATJ (via PDZ1-6 domains); the interaction is required for attachment and extension of TJP1/ZO1 condensates along the apical cell interface. Post-translationally, phosphorylated at tyrosine redidues in response to epidermal growth factor (EGF). This response is dependent on an intact actin microfilament system. Dephosphorylated by PTPRJ.

The protein localises to the cell membrane. It localises to the cell junction. The protein resides in the tight junction. Its subcellular location is the gap junction. Functionally, TJP1, TJP2, and TJP3 are closely related scaffolding proteins that link tight junction (TJ) transmembrane proteins such as claudins, junctional adhesion molecules, and occludin to the actin cytoskeleton. Forms a multistranded TJP1/ZO1 condensate which elongates to form a tight junction belt, the belt is anchored at the apical cell membrane via interaction with PATJ. The tight junction acts to limit movement of substances through the paracellular space and as a boundary between the compositionally distinct apical and basolateral plasma membrane domains of epithelial and endothelial cells. Necessary for lumenogenesis, and particularly efficient epithelial polarization and barrier formation. Plays a role in the regulation of cell migration by targeting CDC42BPBb to the leading edge of migrating cells. With TJP2 and TJP3, participates in the junctional retention and stability of the transcription factor DBPA, but is not involved in its shuttling to the nucleus. May play a role in mediating cell morphology changes during ameloblast differentiation via its role in tight junctions. The polypeptide is Tight junction protein 1 (Canis lupus familiaris (Dog)).